The primary structure comprises 1183 residues: Spermatogenesis-associated protein 31G1 (1183 aa).

6 disordered regions span residues 109 to 153 (TPIG…FPTF), 469 to 555 (LMPA…SPWA), 661 to 686 (TVDD…SSEP), 843 to 884 (ASQG…VSEV), 973 to 1032 (CLHS…TGLL), and 1048 to 1087 (QKRG…PAEA). Positions 124–134 (CRSEGRPRATE) are enriched in basic and acidic residues. Polar residues predominate over residues 135–153 (TQEQVLIQSPSPSRSFPTF). Basic and acidic residues predominate over residues 487-509 (NPKERLSAPKDVRENLGYREHPH). A compositionally biased stretch (polar residues) spans 671–685 (TGKNTDNTKKCSSSE). Positions 847-858 (PNPPAVNPPQPT) are enriched in pro residues. A compositionally biased stretch (polar residues) spans 975 to 984 (HSSSQPQAQA). Over residues 993 to 1002 (QKSKRLKRKA) the composition is skewed to basic residues. Residues 1069 to 1079 (SPTNTRENNPA) show a composition bias toward polar residues.

Expressed in kidney and testis. Expressed at lower levels in stomach, intestine, epididymis and ovary. Expressed at very low levels in heart and spleen.

Functionally, dispensable for normal development and fertility. This Mus musculus (Mouse) protein is Spermatogenesis-associated protein 31G1 (Spata31g1).